A 117-amino-acid polypeptide reads, in one-letter code: UPF0127 protein PYRAB11210 (117 aa).

This sequence belongs to the UPF0127 family.

This Pyrococcus abyssi (strain GE5 / Orsay) protein is UPF0127 protein PYRAB11210.